Here is a 626-residue protein sequence, read N- to C-terminus: Chaperone protein HtpG (626 aa).

The tract at residues 1–341 (METKQFKAES…SEDLSLNISR (341 aa)) is a; substrate-binding. The interval 342 to 552 (EILQHDRQLK…EGELSIEMEK (211 aa)) is b. Residues 553–626 (VLNAMPNNQN…FTNNICKIMK (74 aa)) form a c region.

Belongs to the heat shock protein 90 family. In terms of assembly, homodimer.

The protein localises to the cytoplasm. Its function is as follows. Molecular chaperone. Has ATPase activity. The protein is Chaperone protein HtpG of Clostridium botulinum (strain 657 / Type Ba4).